We begin with the raw amino-acid sequence, 513 residues long: Coiled-coil domain-containing protein 102B (513 aa).

The required for centriolar localization and for interaction with CEP250, CROCC, LRRC45 and NEK2 stretch occupies residues 1–217; that stretch reads MNLDSIHRLI…IDSLKLSEEM (217 aa). Residues Ser21, Ser22, Ser34, Ser135, Ser142, Ser194, and Ser210 each carry the phosphoserine modification. Positions 72–142 form a coiled coil; that stretch reads ELRLRELEEV…ELSTLKKKQS (71 aa). 2 coiled-coil regions span residues 268–337 and 363–513; these read QKIL…ESKS and WDKR…LQNW. 3 positions are modified to phosphoserine: Ser401, Ser404, and Ser406. The disordered stretch occupies residues 493-513; that stretch reads LDEEKERNENLETELRHLQNW.

Interacts (via N-terminus) with centriolar protein CEP250/CNAP1; the interaction results in recruitment of CCDC102B to the proximal ends of centrioles. Interacts (via N-terminus) with CROCC/rootletin and LRRC45. Interacts (via N-terminus) with serine/threonine-protein kinase NEK2; the interaction results in phosphorylation of CCDC102B. Post-translationally, phosphorylated directly or indirectly by NEK2 during mitosis which causes dissociation of CCDC102B from the centrosome and allows for centrosome separation.

The protein resides in the cytoplasm. The protein localises to the cytoskeleton. Its subcellular location is the microtubule organizing center. It is found in the centrosome. It localises to the centriole. Functionally, during interphase, forms fibers at the proximal ends of centrioles to maintain centrosome cohesion. During mitosis, dissociates from the centrosome following phosphorylation to allow centrosome separation. Contributes to CROCC/rootletin filament formation. This chain is Coiled-coil domain-containing protein 102B (CCDC102B), found in Homo sapiens (Human).